The chain runs to 771 residues: Putative 8-amino-7-oxononanoate synthase 2 (771 aa).

The interval 1-418 is unknown; it reads MPTGLGYDFL…TVKAAELGEI (418 aa). Arginine 407 contributes to the substrate binding site. Positions 419-771 are KAPA synthase; it reads VLLGTNSYLG…EDLTPQGAAL (353 aa). Position 485 to 486 (485 to 486) interacts with pyridoxal 5'-phosphate; sequence GY. Position 510 (histidine 510) interacts with substrate. Pyridoxal 5'-phosphate contacts are provided by residues serine 556 and 581 to 584; that span reads DESH. Lysine 615 carries the post-translational modification N6-(pyridoxal phosphate)lysine.

It in the C-terminal section; belongs to the class-II pyridoxal-phosphate-dependent aminotransferase family. BioF subfamily. Requires pyridoxal 5'-phosphate as cofactor.

The enzyme catalyses 6-carboxyhexanoyl-[ACP] + L-alanine + H(+) = (8S)-8-amino-7-oxononanoate + holo-[ACP] + CO2. Functionally, catalyzes the decarboxylative condensation of pimeloyl-[acyl-carrier protein] and L-alanine to produce 8-amino-7-oxononanoate (AON), [acyl-carrier protein], and carbon dioxide. In Mycobacterium tuberculosis (strain CDC 1551 / Oshkosh), this protein is Putative 8-amino-7-oxononanoate synthase 2 (bioF2).